Reading from the N-terminus, the 403-residue chain is MAAVGSPGSLESAPRIMRLVAECSRSRARAGELRLPHGTVATPVFMPVGTQATMKGITAEQLDSLGCRICLGNTYHLGLRPGPELIQKAHGLHGFMNWPHNLLTDSGGFQMVSLISLSEVTEEGVRFRSPYDGEETLLSPERSVEIQNALGSDIIMQLDDVVSSTVTGPRVEEAMHRSVRWLDRCIAAHKRQDKQNLFAIIQGGLNADLRTTCLKEMTKRDVPGFAIGGLSGGESKEQFWKMVALSTSMLPKDKPRYLMGVGYATDLVVCVALGCDMFDCVYPTRTARFGSALVPTGNLQLKKQQYAKDFSPINPECPCATCQTHSRAFLHTLLHSDNTAALHHLTVHNIAYQLQLLSAARSSILEQRFPDFVRNFMRTMYGDHSLCPAWAIEALASVGITLT.

A2 carries the N-acetylalanine modification. D105 functions as the Proton acceptor in the catalytic mechanism. D105–F109 provides a ligand contact to queuine. The residue at position 139 (S139) is a Phosphoserine. The queuine site is built by D159, Q202, and G229. An RNA binding region spans residues G260–D266. D279 acts as the Nucleophile in catalysis. Positions T284–R288 are RNA binding; important for wobble base 34 recognition. Residues C317, C319, C322, and H348 each contribute to the Zn(2+) site.

The protein belongs to the queuine tRNA-ribosyltransferase family. As to quaternary structure, heterodimer of a catalytic subunit QTRT1 and an accessory subunit QTRT2. The cofactor is Zn(2+).

The protein localises to the cytoplasm. It localises to the mitochondrion outer membrane. The enzyme catalyses guanosine(34) in tRNA + queuine = queuosine(34) in tRNA + guanine. Catalytic subunit of the queuine tRNA-ribosyltransferase (TGT) that catalyzes the base-exchange of a guanine (G) residue with queuine (Q) at position 34 (anticodon wobble position) in tRNAs with GU(N) anticodons (tRNA-Asp, -Asn, -His and -Tyr), resulting in the hypermodified nucleoside queuosine (7-(((4,5-cis-dihydroxy-2-cyclopenten-1-yl)amino)methyl)-7-deazaguanosine). Catalysis occurs through a double-displacement mechanism. The nucleophile active site attacks the C1' of nucleotide 34 to detach the guanine base from the RNA, forming a covalent enzyme-RNA intermediate. The proton acceptor active site deprotonates the incoming queuine, allowing a nucleophilic attack on the C1' of the ribose to form the product. This is Queuine tRNA-ribosyltransferase catalytic subunit 1 from Rattus norvegicus (Rat).